A 147-amino-acid polypeptide reads, in one-letter code: MGHFTEEDKATITSLWGKVNVEDAGGETLGRLLVVYPWTQRFFDSFGNLSSASAIMGNPKVKAHGKKVLTSLGDATKHLDDLKGTFAQLSELHCDKLHVDPENFKLLGNVLVTVLAIHFGKEFTPEVQASWQKMVTAVASALSSRYH.

Glycine 2 is modified (N-acetylglycine; in form Hb F1). The 145-residue stretch at 3-147 (HFTEEDKATI…VASALSSRYH (145 aa)) folds into the Globin domain. The residue at position 13 (threonine 13) is a Phosphothreonine. Serine 45, serine 51, and serine 53 each carry phosphoserine. An N6-acetyllysine modification is found at lysine 60. Histidine 64 provides a ligand contact to heme b. Position 83 is an N6-acetyllysine (lysine 83). A heme b-binding site is contributed by histidine 93. Cysteine 94 carries the S-nitrosocysteine modification. Serine 140 carries the post-translational modification Phosphoserine.

The protein belongs to the globin family. Heterotetramer of two alpha chains and two gamma chains in fetal hemoglobin (Hb F). In the case of deletions affecting one or more of the alpha chains, the excess gamma chains form homotetramers that exhibit neither Bohr effect nor heme-heme cooperativity (hemoglobin Bart's). Acetylation of Gly-2 converts Hb F to the minor Hb F1. As to expression, red blood cells.

In terms of biological role, gamma chains make up the fetal hemoglobin F, in combination with alpha chains. The chain is Hemoglobin subunit gamma-1 (HBG1) from Homo sapiens (Human).